We begin with the raw amino-acid sequence, 241 residues long: Methylthioribulose-1-phosphate dehydratase (241 aa).

Cysteine 96 is a substrate binding site. Zn(2+) is bound by residues histidine 114 and histidine 116. Residue glutamate 138 is the Proton donor/acceptor of the active site. Zn(2+) is bound at residue histidine 194.

Belongs to the aldolase class II family. MtnB subfamily. Zn(2+) is required as a cofactor.

It localises to the cytoplasm. The enzyme catalyses 5-(methylsulfanyl)-D-ribulose 1-phosphate = 5-methylsulfanyl-2,3-dioxopentyl phosphate + H2O. It participates in amino-acid biosynthesis; L-methionine biosynthesis via salvage pathway; L-methionine from S-methyl-5-thio-alpha-D-ribose 1-phosphate: step 2/6. Catalyzes the dehydration of methylthioribulose-1-phosphate (MTRu-1-P) into 2,3-diketo-5-methylthiopentyl-1-phosphate (DK-MTP-1-P). Functions in the methionine salvage pathway. May play a role in apoptosis. The polypeptide is Methylthioribulose-1-phosphate dehydratase (Danio rerio (Zebrafish)).